The following is a 497-amino-acid chain: 3-octaprenyl-4-hydroxybenzoate carboxy-lyase (497 aa).

N175 is a binding site for Mn(2+). Prenylated FMN contacts are provided by residues 178-180 (IYR), 192-194 (RWL), and 197-198 (RG). Position 241 (E241) interacts with Mn(2+). The Proton donor role is filled by D290.

This sequence belongs to the UbiD family. Homohexamer. The cofactor is prenylated FMN. Mn(2+) serves as cofactor.

It localises to the cell membrane. The enzyme catalyses a 4-hydroxy-3-(all-trans-polyprenyl)benzoate + H(+) = a 2-(all-trans-polyprenyl)phenol + CO2. It participates in cofactor biosynthesis; ubiquinone biosynthesis. In terms of biological role, catalyzes the decarboxylation of 3-octaprenyl-4-hydroxy benzoate to 2-octaprenylphenol, an intermediate step in ubiquinone biosynthesis. In Shigella sonnei (strain Ss046), this protein is 3-octaprenyl-4-hydroxybenzoate carboxy-lyase.